Reading from the N-terminus, the 237-residue chain is Peptidase E (237 aa).

Catalysis depends on charge relay system residues serine 122, aspartate 137, and histidine 159.

Belongs to the peptidase S51 family.

The protein resides in the cytoplasm. It carries out the reaction Dipeptidase E catalyzes the hydrolysis of dipeptides Asp-|-Xaa. It does not act on peptides with N-terminal Glu, Asn or Gln, nor does it cleave isoaspartyl peptides.. In terms of biological role, hydrolyzes dipeptides containing N-terminal aspartate residues. May play a role in allowing the cell to use peptide aspartate to spare carbon otherwise required for the synthesis of the aspartate family of amino acids. In Shewanella baltica (strain OS155 / ATCC BAA-1091), this protein is Peptidase E.